We begin with the raw amino-acid sequence, 405 residues long: 3-hydroxy-3-methylglutaryl-coenzyme A reductase (405 aa).

Catalysis depends on charge relay system residues Glu-100 and Asp-310. His-400 serves as the catalytic Proton donor.

The protein belongs to the HMG-CoA reductase family.

It catalyses the reaction (R)-mevalonate + 2 NADP(+) + CoA = (3S)-3-hydroxy-3-methylglutaryl-CoA + 2 NADPH + 2 H(+). It participates in metabolic intermediate biosynthesis; (R)-mevalonate biosynthesis; (R)-mevalonate from acetyl-CoA: step 3/3. Its function is as follows. Converts HMG-CoA to mevalonate. The chain is 3-hydroxy-3-methylglutaryl-coenzyme A reductase (hmgA) from Methanocaldococcus jannaschii (strain ATCC 43067 / DSM 2661 / JAL-1 / JCM 10045 / NBRC 100440) (Methanococcus jannaschii).